We begin with the raw amino-acid sequence, 979 residues long: Glycine dehydrogenase (decarboxylating) (979 aa).

Lys724 bears the N6-(pyridoxal phosphate)lysine mark.

The protein belongs to the GcvP family. The glycine cleavage system is composed of four proteins: P, T, L and H. Pyridoxal 5'-phosphate serves as cofactor.

It catalyses the reaction N(6)-[(R)-lipoyl]-L-lysyl-[glycine-cleavage complex H protein] + glycine + H(+) = N(6)-[(R)-S(8)-aminomethyldihydrolipoyl]-L-lysyl-[glycine-cleavage complex H protein] + CO2. In terms of biological role, the glycine cleavage system catalyzes the degradation of glycine. The P protein binds the alpha-amino group of glycine through its pyridoxal phosphate cofactor; CO(2) is released and the remaining methylamine moiety is then transferred to the lipoamide cofactor of the H protein. This is Glycine dehydrogenase (decarboxylating) from Nostoc punctiforme (strain ATCC 29133 / PCC 73102).